The chain runs to 604 residues: Elongation factor 4 1 (604 aa).

Residues 10 to 191 (EHIRNFCIIA…AIVDSVPAPT (182 aa)) enclose the tr-type G domain. GTP is bound by residues 22 to 27 (DHGKST) and 138 to 141 (NKID).

The protein belongs to the TRAFAC class translation factor GTPase superfamily. Classic translation factor GTPase family. LepA subfamily.

It is found in the cell inner membrane. The enzyme catalyses GTP + H2O = GDP + phosphate + H(+). Required for accurate and efficient protein synthesis under certain stress conditions. May act as a fidelity factor of the translation reaction, by catalyzing a one-codon backward translocation of tRNAs on improperly translocated ribosomes. Back-translocation proceeds from a post-translocation (POST) complex to a pre-translocation (PRE) complex, thus giving elongation factor G a second chance to translocate the tRNAs correctly. Binds to ribosomes in a GTP-dependent manner. The polypeptide is Elongation factor 4 1 (Rhodopirellula baltica (strain DSM 10527 / NCIMB 13988 / SH1)).